Here is a 240-residue protein sequence, read N- to C-terminus: PF03932 family protein CutC (240 aa).

The protein belongs to the CutC family.

Its subcellular location is the cytoplasm. This chain is PF03932 family protein CutC, found in Xanthomonas campestris pv. campestris (strain B100).